We begin with the raw amino-acid sequence, 860 residues long: MQEQYRPEEIESKVQLHWDEKRTFEVTEDESKEKYYCLSMLPYPSGRLHMGHVRNYTIGDVIARYQRMLGKNVLQPIGWDAFGLPAEGAAVKNNTAPAPWTYDNIAYMKNQLKMLGFGYDWSRELATCTPEYYRWEQKFFTELYKKGLVYKKTSAVNWCPNDQTVLANEQVIDGCCWRCDTKVERKEIPQWFIKITAYADELLNNLDKLDHWPDTVKTMQRNWIGRSEGVEITFNVNDYDNTLTVYTTRPDTFMGCTYLAVAAGHPLAQKAAENNPELAAFIDECRNTKVAEAEMATMEKKGVDTGFKAVHPLTGEEIPVWAANFVLMEYGTGAVMAVPGHDQRDYEFASKYGLNIKPVILAADGSEPDLSQQALTEKGVLFNSGEFNGLDHEAAFNAIADKLTAMGVGERKVNYRLRDWGVSRQRYWGAPIPMVTLEDGTVMPTPDDQLPVILPEDVVMDGITSPIKADPEWAKTTVNGMPALRETDTFDTFMESSWYYARYTCPEYKEGMLDSKAANYWLPVDIYIGGIEHAIMHLLYFRFFHKLMRDAGMVNSDEPAKQLLCQGMVLADAFYYVGENGERNWVSPVDAIVERDEKGRIVKAKDAAGHELVYTGMSKMSKSKNNGIDPQVMVERYGADTVRLFMMFASPADMTLEWQESGVEGANRFLKRVWKLVYEHTAKGDVAALNVDALTEDQKALRRDVHKTIAKVTDDIGRRQTFNTAIAAIMELMNKLAKAPTDGEQDRALMQEALLAVIRMLNPFTPHICFTLWQELKGEGDIDNAPWPVADEKAMVEDSTLVVVQVNGKVRAKITVPVDATEEQVRERAGQEHLVAKYLDGVTVRKVIYVPGKLLNLVVG.

A 'HIGH' region motif is present at residues 42-52 (PYPSGRLHMGH). Positions 619-623 (KMSKS) match the 'KMSKS' region motif. Residue Lys-622 participates in ATP binding.

The protein belongs to the class-I aminoacyl-tRNA synthetase family.

The protein resides in the cytoplasm. It catalyses the reaction tRNA(Leu) + L-leucine + ATP = L-leucyl-tRNA(Leu) + AMP + diphosphate. This is Leucine--tRNA ligase from Escherichia coli O7:K1 (strain IAI39 / ExPEC).